We begin with the raw amino-acid sequence, 190 residues long: Elongation factor P 2 (190 aa).

The protein belongs to the elongation factor P family.

It is found in the cytoplasm. The protein operates within protein biosynthesis; polypeptide chain elongation. Involved in peptide bond synthesis. Stimulates efficient translation and peptide-bond synthesis on native or reconstituted 70S ribosomes in vitro. Probably functions indirectly by altering the affinity of the ribosome for aminoacyl-tRNA, thus increasing their reactivity as acceptors for peptidyl transferase. The protein is Elongation factor P 2 (efp2) of Chlamydia caviae (strain ATCC VR-813 / DSM 19441 / 03DC25 / GPIC) (Chlamydophila caviae).